We begin with the raw amino-acid sequence, 171 residues long: MEYFDVARILTTHGLNGEVKVNVITDFPEERFAEGMHLSLRSDTNRTLTVEKSRPFKQFWLIQFKEITDIDQAEKLRGQILVVSEEDRGELPDGVYYYKDIFDCDVIDEETGKRIGKIVDIQSPGANDIWLVREDDGKEYWIPNIADVVKKVDVAAKKVYVELMEGLRDED.

A PRC barrel domain is found at 93 to 167 (DGVYYYKDIF…KVYVELMEGL (75 aa)).

It belongs to the RimM family. Binds ribosomal protein uS19.

Its subcellular location is the cytoplasm. Functionally, an accessory protein needed during the final step in the assembly of 30S ribosomal subunit, possibly for assembly of the head region. Essential for efficient processing of 16S rRNA. May be needed both before and after RbfA during the maturation of 16S rRNA. It has affinity for free ribosomal 30S subunits but not for 70S ribosomes. This Lactobacillus helveticus (strain DPC 4571) protein is Ribosome maturation factor RimM.